The sequence spans 466 residues: 3-isopropylmalate dehydratase large subunit (466 aa).

[4Fe-4S] cluster is bound by residues C347, C407, and C410.

The protein belongs to the aconitase/IPM isomerase family. LeuC type 1 subfamily. Heterodimer of LeuC and LeuD. Requires [4Fe-4S] cluster as cofactor.

The catalysed reaction is (2R,3S)-3-isopropylmalate = (2S)-2-isopropylmalate. Its pathway is amino-acid biosynthesis; L-leucine biosynthesis; L-leucine from 3-methyl-2-oxobutanoate: step 2/4. Its function is as follows. Catalyzes the isomerization between 2-isopropylmalate and 3-isopropylmalate, via the formation of 2-isopropylmaleate. This chain is 3-isopropylmalate dehydratase large subunit, found in Shigella flexneri serotype 5b (strain 8401).